The chain runs to 171 residues: Nicotinamide-nucleotide adenylyltransferase (171 aa).

This sequence belongs to the archaeal NMN adenylyltransferase family.

The protein localises to the cytoplasm. The catalysed reaction is beta-nicotinamide D-ribonucleotide + ATP + H(+) = diphosphate + NAD(+). The protein operates within cofactor biosynthesis; NAD(+) biosynthesis; NAD(+) from nicotinamide D-ribonucleotide: step 1/1. This Methanococcus maripaludis (strain C6 / ATCC BAA-1332) protein is Nicotinamide-nucleotide adenylyltransferase.